We begin with the raw amino-acid sequence, 437 residues long: Oxysterol-binding protein homolog 7 (437 aa).

Residues Ile23 to Pro32 show a composition bias toward polar residues. The interval Ile23 to Glu42 is disordered. The segment at Ile54–His393 is OSBP-related domain (ORD). A 1,2-diacyl-sn-glycero-3-phospho-(1D-myo-inositol 4-phosphate)-binding positions include Leu64–Leu69, Lys126–Asn129, and His157–His158. A 1,2-diacyl-sn-glycero-3-phospho-L-serine is bound by residues Leu64–Leu69 and Asn129. Residue Ser183 coordinates a 1,2-diacyl-sn-glycero-3-phospho-L-serine. Lys276 participates in a covalent cross-link: Glycyl lysine isopeptide (Lys-Gly) (interchain with G-Cter in ubiquitin). 3 residues coordinate a 1,2-diacyl-sn-glycero-3-phospho-(1D-myo-inositol 4-phosphate): Lys351, Glu355, and Arg359.

Belongs to the OSBP family. In terms of assembly, interacts with the AAA ATPase VPS4; regulates OSH7 membrane association. VPS4 is required for membrane dissociation of OSH7.

It localises to the cytoplasm. The protein resides in the cell membrane. The protein localises to the endoplasmic reticulum membrane. The catalysed reaction is a 1,2-diacyl-sn-glycero-3-phospho-L-serine(in) = a 1,2-diacyl-sn-glycero-3-phospho-L-serine(out). Functionally, ipid transport protein (LTP) involved in non-vesicular transfer of lipids between membranes. Functions in phosphoinositide-coupled directional transport of various lipids by carrying the lipid molecule in a hydrophobic pocket and transferring it between membranes through the cytosol. Involved in maintenance of intracellular sterol distribution and homeostasis. Involved in lipid countertransport between the endoplasmic reticulum and the plasma membrane. Specifically exchanges phosphatidylserine with phosphatidylinositol 4-phosphate (PI4P), delivering phosphatidylserine to the PM in exchange for PI4P, which is delivered to the ER-localized PI4P phosphatase SAC1 for degradation. Thus, by maintaining a PI4P gradient at the ER/PM interface, SAC1 drives PS transport. Binds phosphatidylserine and PI4P in a mutually exclusive manner. The sequence is that of Oxysterol-binding protein homolog 7 from Saccharomyces cerevisiae (strain ATCC 204508 / S288c) (Baker's yeast).